A 376-amino-acid polypeptide reads, in one-letter code: UPF0754 membrane protein SSP0953 (376 aa).

The next 2 membrane-spanning stretches (helical) occupy residues 4–24 (FLVI…TNVI) and 356–376 (FLGF…AIFV).

It belongs to the UPF0754 family.

The protein resides in the cell membrane. In Staphylococcus saprophyticus subsp. saprophyticus (strain ATCC 15305 / DSM 20229 / NCIMB 8711 / NCTC 7292 / S-41), this protein is UPF0754 membrane protein SSP0953.